Consider the following 148-residue polypeptide: Large ribosomal subunit protein bL9 (148 aa).

It belongs to the bacterial ribosomal protein bL9 family.

Its function is as follows. Binds to the 23S rRNA. The chain is Large ribosomal subunit protein bL9 from Acetivibrio thermocellus (strain ATCC 27405 / DSM 1237 / JCM 9322 / NBRC 103400 / NCIMB 10682 / NRRL B-4536 / VPI 7372) (Clostridium thermocellum).